The primary structure comprises 212 residues: Thymidylate kinase (212 aa).

11–18 contacts ATP; that stretch reads GPEGAGKT.

This sequence belongs to the thymidylate kinase family.

It carries out the reaction dTMP + ATP = dTDP + ADP. In terms of biological role, phosphorylation of dTMP to form dTDP in both de novo and salvage pathways of dTTP synthesis. The chain is Thymidylate kinase from Streptococcus pneumoniae (strain Taiwan19F-14).